A 270-amino-acid polypeptide reads, in one-letter code: Cyclic AMP-dependent transcription factor ATF-1 (270 aa).

The tract at residues methionine 1–valine 91 is disordered. Residues threonine 9 to glutamine 21 show a composition bias toward polar residues. Residues glutamine 31–alanine 90 enclose the KID domain. At serine 63 the chain carries Phosphoserine; by CaMK1, CDK3, RPS6KA4 and RPS6KA5. A compositionally biased stretch (basic and acidic residues) spans isoleucine 67–glycine 83. Position 197 is a phosphoserine; by HIPK2 (serine 197). Glycyl lysine isopeptide (Lys-Gly) (interchain with G-Cter in SUMO2) cross-links involve residues lysine 207 and lysine 214. In terms of domain architecture, bZIP spans glutamine 212 to valine 270. Positions lysine 214–lysine 238 are basic motif. The leucine-zipper stretch occupies residues leucine 240–leucine 261.

Belongs to the bZIP family. ATF subfamily. In terms of assembly, binds DNA as a dimer. Interacts with HIPK2 and CDK3. Interacts with MOTS-c, a peptide produced by the mitochondrially encoded 12S rRNA MT-RNR1; the interaction occurs in the nucleus following metabolic stress. In terms of processing, phosphorylated at Ser-197 by HIPK2 in response to genotoxic stress. This phosphorylation promotes transcription repression of FTH1 and other antioxidant detoxification genes. The CDK3-mediated phosphorylation at Ser-63 promotes its transactivation and transcriptional activities. Phosphorylated at Ser-63 by RPS6KA4 and RPS6KA5 in response to mitogenic or stress stimuli.

Its subcellular location is the nucleus. Functionally, this protein binds the cAMP response element (CRE) (consensus: 5'-GTGACGT[AC][AG]-3'), a sequence present in many viral and cellular promoters. Mediates PKA-induced stimulation of CRE-reporter genes. Represses the expression of FTH1 and other antioxidant detoxification genes. Triggers cell proliferation and transformation. The polypeptide is Cyclic AMP-dependent transcription factor ATF-1 (ATF1) (Bos taurus (Bovine)).